Reading from the N-terminus, the 339-residue chain is Biotin synthase (339 aa).

The Radical SAM core domain occupies 55–282; the sequence is NAVQLSTLLS…KAVVRLSAGR (228 aa). [4Fe-4S] cluster is bound by residues C70, C74, and C77. C114, C145, C205, and R277 together coordinate [2Fe-2S] cluster.

Belongs to the radical SAM superfamily. Biotin synthase family. In terms of assembly, homodimer. [4Fe-4S] cluster serves as cofactor. [2Fe-2S] cluster is required as a cofactor.

The catalysed reaction is (4R,5S)-dethiobiotin + (sulfur carrier)-SH + 2 reduced [2Fe-2S]-[ferredoxin] + 2 S-adenosyl-L-methionine = (sulfur carrier)-H + biotin + 2 5'-deoxyadenosine + 2 L-methionine + 2 oxidized [2Fe-2S]-[ferredoxin]. The protein operates within cofactor biosynthesis; biotin biosynthesis; biotin from 7,8-diaminononanoate: step 2/2. Functionally, catalyzes the conversion of dethiobiotin (DTB) to biotin by the insertion of a sulfur atom into dethiobiotin via a radical-based mechanism. This Burkholderia ambifaria (strain ATCC BAA-244 / DSM 16087 / CCUG 44356 / LMG 19182 / AMMD) (Burkholderia cepacia (strain AMMD)) protein is Biotin synthase.